The following is a 423-amino-acid chain: MQQIKFIDLFSGMSGIRKGFEQACRKQSVACKCVFTSEIKPAALEVLKQNYPDEVPYGDITKIETGDIPDFDILLAGFPCQAFSFAGKRLGFEDTRGTLFFDVARILKAKKPKGFILENVEGLVTHDRKDPTQKIGRTLTVILETLEALGYYVSWKVLNAKDFGIPQNRKRIYLTGSLKSKPDLSFETTPSPKLKNILESGLPTESSPFIKKLLKKFPPSELYGKSVKDKRGGKNNIHSWDIELKGAVTEEEKQLLNILLKERRKKKWASEIGIDWMDGMPLTKAQISTFYKHPDLQNILDSLTDKGYLVLEHPKQKIGGQRIKDESLPKGYNIVSGKKSFEINKILDPNDVAPTLVAMDMEHLFVVDNGGLRTLTGKEGLRLFGYPDDYSFDIPKKDKYDLLGNTVAVPVIKAVSERLLHTL.

The SAM-dependent MTase C5-type domain maps to 4 to 423; sequence IKFIDLFSGM…AVSERLLHTL (420 aa). Cys80 is an active-site residue.

Belongs to the class I-like SAM-binding methyltransferase superfamily. C5-methyltransferase family.

It catalyses the reaction a 2'-deoxycytidine in DNA + S-adenosyl-L-methionine = a 5-methyl-2'-deoxycytidine in DNA + S-adenosyl-L-homocysteine + H(+). Functionally, a methylase that recognizes the double-stranded sequence 5'-GGNNCC-3', methylates C-? on both strands, and protects the DNA from cleavage by the NlaIV endonuclease. This Neisseria lactamica protein is Type II methyltransferase M.NlaIV (nlaIVM).